A 256-amino-acid chain; its full sequence is tRNA (guanine-N(1)-)-methyltransferase (256 aa).

Residues Gly113 and 132 to 137 contribute to the S-adenosyl-L-methionine site; that span reads VGDYVL.

Belongs to the RNA methyltransferase TrmD family. In terms of assembly, homodimer.

The protein resides in the cytoplasm. It carries out the reaction guanosine(37) in tRNA + S-adenosyl-L-methionine = N(1)-methylguanosine(37) in tRNA + S-adenosyl-L-homocysteine + H(+). In terms of biological role, specifically methylates guanosine-37 in various tRNAs. The sequence is that of tRNA (guanine-N(1)-)-methyltransferase from Coprothermobacter proteolyticus (strain ATCC 35245 / DSM 5265 / OCM 4 / BT).